The primary structure comprises 303 residues: UPF0282 protein MM_2966 (303 aa).

It belongs to the UPF0282 family.

This chain is UPF0282 protein MM_2966, found in Methanosarcina mazei (strain ATCC BAA-159 / DSM 3647 / Goe1 / Go1 / JCM 11833 / OCM 88) (Methanosarcina frisia).